The primary structure comprises 378 residues: Glutamate 5-kinase (378 aa).

Lysine 20 provides a ligand contact to ATP. Residues serine 60, aspartate 147, and asparagine 159 each coordinate substrate. ATP-binding positions include 179–180 (TD) and 221–227 (TGGMATK). The region spanning 286–364 (AGDIVIDAGA…QEIYKVLGYE (79 aa)) is the PUA domain.

The protein belongs to the glutamate 5-kinase family.

The protein resides in the cytoplasm. It catalyses the reaction L-glutamate + ATP = L-glutamyl 5-phosphate + ADP. It functions in the pathway amino-acid biosynthesis; L-proline biosynthesis; L-glutamate 5-semialdehyde from L-glutamate: step 1/2. Catalyzes the transfer of a phosphate group to glutamate to form L-glutamate 5-phosphate. The sequence is that of Glutamate 5-kinase from Photobacterium profundum (strain SS9).